The following is a 711-amino-acid chain: Ribosomal RNA large subunit methyltransferase K/L (711 aa).

The 112-residue stretch at Leu-43–Phe-154 folds into the THUMP domain.

The protein belongs to the methyltransferase superfamily. RlmKL family.

The protein localises to the cytoplasm. It catalyses the reaction guanosine(2445) in 23S rRNA + S-adenosyl-L-methionine = N(2)-methylguanosine(2445) in 23S rRNA + S-adenosyl-L-homocysteine + H(+). The enzyme catalyses guanosine(2069) in 23S rRNA + S-adenosyl-L-methionine = N(2)-methylguanosine(2069) in 23S rRNA + S-adenosyl-L-homocysteine + H(+). Specifically methylates the guanine in position 2445 (m2G2445) and the guanine in position 2069 (m7G2069) of 23S rRNA. The polypeptide is Ribosomal RNA large subunit methyltransferase K/L (Shewanella woodyi (strain ATCC 51908 / MS32)).